A 443-amino-acid polypeptide reads, in one-letter code: Ribosomal protein uS12 methylthiotransferase RimO (443 aa).

One can recognise an MTTase N-terminal domain in the interval 9-119 (PKIGMVSLGC…VVSAVHDAAP (111 aa)). [4Fe-4S] cluster is bound by residues cysteine 18, cysteine 54, cysteine 83, cysteine 150, cysteine 154, and cysteine 157. Residues 136–373 (LTPRHYSYLK…MEKAAQISEA (238 aa)) enclose the Radical SAM core domain. The TRAM domain occupies 376–443 (QAKIGRDIAT…EHDLFGVALS (68 aa)).

This sequence belongs to the methylthiotransferase family. RimO subfamily. It depends on [4Fe-4S] cluster as a cofactor.

It localises to the cytoplasm. The enzyme catalyses L-aspartate(89)-[ribosomal protein uS12]-hydrogen + (sulfur carrier)-SH + AH2 + 2 S-adenosyl-L-methionine = 3-methylsulfanyl-L-aspartate(89)-[ribosomal protein uS12]-hydrogen + (sulfur carrier)-H + 5'-deoxyadenosine + L-methionine + A + S-adenosyl-L-homocysteine + 2 H(+). In terms of biological role, catalyzes the methylthiolation of an aspartic acid residue of ribosomal protein uS12. The protein is Ribosomal protein uS12 methylthiotransferase RimO of Zymomonas mobilis subsp. mobilis (strain ATCC 31821 / ZM4 / CP4).